The sequence spans 314 residues: Vacuolar membrane protein SCY_4732 (314 aa).

Positions 32-61 are disordered; it reads KPTSSVVSETSSKSLPSLTSSAFSTSSGTT. Residues 93-113 form a helical membrane-spanning segment; the sequence is VYIAVGAVIGAIFISILIWWL. Phosphoserine is present on residues Ser-148, Ser-254, and Ser-274. Positions 240–309 are disordered; the sequence is EERKLNLNRP…PSMFLDDVLN (70 aa). Residues 254 to 269 show a composition bias toward basic and acidic residues; sequence SPERKEKKINSMEGYH.

The protein belongs to the PRM5 family.

The protein localises to the vacuole membrane. In Saccharomyces cerevisiae (strain YJM789) (Baker's yeast), this protein is Vacuolar membrane protein SCY_4732.